A 241-amino-acid polypeptide reads, in one-letter code: 1-(5-phosphoribosyl)-5-[(5-phosphoribosylamino)methylideneamino] imidazole-4-carboxamide isomerase (241 aa).

The active-site Proton acceptor is the aspartate 8. The Proton donor role is filled by aspartate 130.

Belongs to the HisA/HisF family.

It is found in the cytoplasm. It catalyses the reaction 1-(5-phospho-beta-D-ribosyl)-5-[(5-phospho-beta-D-ribosylamino)methylideneamino]imidazole-4-carboxamide = 5-[(5-phospho-1-deoxy-D-ribulos-1-ylimino)methylamino]-1-(5-phospho-beta-D-ribosyl)imidazole-4-carboxamide. The protein operates within amino-acid biosynthesis; L-histidine biosynthesis; L-histidine from 5-phospho-alpha-D-ribose 1-diphosphate: step 4/9. In Francisella philomiragia subsp. philomiragia (strain ATCC 25017 / CCUG 19701 / FSC 153 / O#319-036), this protein is 1-(5-phosphoribosyl)-5-[(5-phosphoribosylamino)methylideneamino] imidazole-4-carboxamide isomerase.